Here is a 534-residue protein sequence, read N- to C-terminus: EH domain-containing protein 1 (534 aa).

Methionine 1 bears the N-acetylmethionine mark. The 232-residue stretch at 55–286 (FDNKPMVLLV…DLFKDIQSLP (232 aa)) folds into the Dynamin-type G domain. A G1 motif region spans residues 65-72 (GQYSTGKT). ATP is bound at residue 65-72 (GQYSTGKT). The interval 91-92 (EP) is G2 motif. Positions 153 to 156 (DTPG) are G3 motif. Residues 198–227 (DEFSEVIKALKNHEDKIRVVLNKADQIETQ) are a coiled coil. Residues 219–222 (NKAD) form a G4 motif region. Lysine 220 serves as a coordination point for ATP. Isoleucine 243 is a region of interest (G5 motif). Tryptophan 258 provides a ligand contact to ATP. The 89-residue stretch at 444 to 532 (DKPTYDEIFY…PHLVPPSKRR (89 aa)) folds into the EH domain. Serine 456 is modified (phosphoserine). One can recognise an EF-hand domain in the interval 476 to 511 (LPNTVLGKIWKLADVDRDGLLDDEEFALANHLIKVK). Residues aspartate 489, aspartate 491, aspartate 493, and glutamate 500 each coordinate Ca(2+).

The protein belongs to the TRAFAC class dynamin-like GTPase superfamily. Dynamin/Fzo/YdjA family. EHD subfamily. As to quaternary structure, homooligomer, and heterooligomer with EHD2, EHD3 and EHD4, ATP-binding is required for heterooligomerization. Interacts (via EH domain) with MICALL1 (via NPF1 motif); the interaction is direct and recruits EHD1 to membranes. Interacts with RAB35; the interaction is indirect through MICALL1 and recruits EHD1 to membranes. Interacts (via EH domain) with PACSIN2 (via NPF motifs); regulates localization to tubular recycling endosome membranes. Interacts with PACSIN1. Interacts with RAB8A. Interacts with FER1L5 (via second C2 domain). Interacts with MYOF. Interacts with ZFYVE20. Interacts (via EH domain) with RAB11FIP2.

The protein localises to the recycling endosome membrane. It is found in the early endosome membrane. It localises to the cell membrane. The protein resides in the cell projection. Its subcellular location is the cilium membrane. Functionally, ATP- and membrane-binding protein that controls membrane reorganization/tubulation upon ATP hydrolysis. Acts in early endocytic membrane fusion and membrane trafficking of recycling endosomes. Recruited to endosomal membranes upon nerve growth factor stimulation, indirectly regulates neurite outgrowth. Plays a role in myoblast fusion. Involved in the unidirectional retrograde dendritic transport of endocytosed BACE1 and in efficient sorting of BACE1 to axons implicating a function in neuronal APP processing. Plays a role in the formation of the ciliary vesicle (CV), an early step in cilium biogenesis. Proposed to be required for the fusion of distal appendage vesicles (DAVs) to form the CV by recruiting SNARE complex component SNAP29. Is required for recruitment of transition zone proteins CEP290, RPGRIP1L, TMEM67 and B9D2, and of IFT20 following DAV reorganization before Rab8-dependent ciliary membrane extension. Required for the loss of CCP110 form the mother centriole essential for the maturation of the basal body during ciliogenesis. The polypeptide is EH domain-containing protein 1 (Bos taurus (Bovine)).